Consider the following 215-residue polypeptide: Phosphoenolpyruvate guanylyltransferase (215 aa).

The phosphoenolpyruvate site is built by Thr-144, Gly-159, and Ser-162.

Belongs to the CofC family.

The catalysed reaction is phosphoenolpyruvate + GTP + H(+) = enolpyruvoyl-2-diphospho-5'-guanosine + diphosphate. It functions in the pathway cofactor biosynthesis; coenzyme F420 biosynthesis. Functionally, guanylyltransferase that catalyzes the activation of phosphoenolpyruvate (PEP) as enolpyruvoyl-2-diphospho-5'-guanosine, via the condensation of PEP with GTP. It is involved in the biosynthesis of coenzyme F420, a hydride carrier cofactor. This is Phosphoenolpyruvate guanylyltransferase from Geodermatophilus obscurus (strain ATCC 25078 / DSM 43160 / JCM 3152 / CCUG 61914 / KCC A-0152 / KCTC 9177 / NBRC 13315 / NRRL B-3577 / G-20).